A 248-amino-acid chain; its full sequence is PACRG-like protein (248 aa).

Met-1 is modified (N-acetylmethionine). Polar residues predominate over residues 1–29; it reads MQKSEGSGGTQLKNRATGNYDQRTSSSTQ. The segment at 1 to 71 is disordered; the sequence is MQKSEGSGGT…LNPKTINPFG (71 aa). Over residues 39 to 49 the composition is skewed to low complexity; sequence SKSSLSTSSPE. Ser-47 is subject to Phosphoserine.

The protein is PACRG-like protein (PACRGL) of Homo sapiens (Human).